The chain runs to 95 residues: Protein TusB (95 aa).

It belongs to the DsrH/TusB family. As to quaternary structure, heterohexamer, formed by a dimer of trimers. The hexameric TusBCD complex contains 2 copies each of TusB, TusC and TusD. The TusBCD complex interacts with TusE.

It localises to the cytoplasm. In terms of biological role, part of a sulfur-relay system required for 2-thiolation of 5-methylaminomethyl-2-thiouridine (mnm(5)s(2)U) at tRNA wobble positions. The protein is Protein TusB of Yersinia pseudotuberculosis serotype O:1b (strain IP 31758).